The sequence spans 243 residues: Calcium-binding protein LPS1-beta (243 aa).

EF-hand domains follow at residues 15–49 (EVID…DCPE), 47–82 (CPEE…YTKE), 85–120 (YSSD…ISTK), 121–156 (LVEG…KLPL), 157–189 (CFKK…NLPG), 191–226 (YSEE…LSKD), and 227–243 (DIKN…NGKI). 30 residues coordinate Ca(2+): Asp29, Asn31, Asp33, Thr35, Glu40, Asp60, Asn62, Asp64, Arg66, Glu71, Asp98, Asp100, Asn102, Arg104, Glu109, Asp134, Asp136, Asp138, His140, Glu145, Asp167, Asn169, Asp171, Ser173, Glu178, Asp204, Asn206, Asp208, Arg210, and Glu215.

Aboral ectoderm, a squamous epithelium covering the surface of the late stage embryo and larva.

Its function is as follows. Calcium-binding protein involved in larval development and metamorphosis. Likely to function as calcium buffers mediating the transport of calcium from the sea water to the blastocoel where calcium is required for skeleton formation. The chain is Calcium-binding protein LPS1-beta from Lytechinus pictus (Painted sea urchin).